We begin with the raw amino-acid sequence, 358 residues long: Type II methyltransferase M.HpaII (358 aa).

The region spanning 32 to 356 (FTFIDLFAGI…KKILEKLGNL (325 aa)) is the SAM-dependent MTase C5-type domain. The active site involves cysteine 103.

It belongs to the class I-like SAM-binding methyltransferase superfamily. C5-methyltransferase family. As to quaternary structure, monomer.

The catalysed reaction is a 2'-deoxycytidine in DNA + S-adenosyl-L-methionine = a 5-methyl-2'-deoxycytidine in DNA + S-adenosyl-L-homocysteine + H(+). Its function is as follows. A methylase that recognizes the double-stranded sequence 5'-CCGG-3', methylates C-2 on both strands, and protects the DNA from cleavage by the HpaII endonuclease. This chain is Type II methyltransferase M.HpaII, found in Haemophilus parainfluenzae.